The primary structure comprises 135 residues: Large ribosomal subunit protein uL18 (135 aa).

Residues M1 to R23 form a disordered region.

It belongs to the universal ribosomal protein uL18 family. Part of the 50S ribosomal subunit; part of the 5S rRNA/L5/L18/L25 subcomplex. Contacts the 5S and 23S rRNAs.

This is one of the proteins that bind and probably mediate the attachment of the 5S RNA into the large ribosomal subunit, where it forms part of the central protuberance. The protein is Large ribosomal subunit protein uL18 of Mycobacterium marinum (strain ATCC BAA-535 / M).